Here is a 182-residue protein sequence, read N- to C-terminus: Protein canopy homolog 2 (182 aa).

Positions 1-20 (MKGWGWLALLLGALLGTAWA) are cleaved as a signal peptide. One can recognise a Saposin B-type domain in the interval 24–175 (QDLHCGACRA…KRTDLCDHAL (152 aa)). Cystine bridges form between cysteine 28-cysteine 171, cysteine 31-cysteine 164, and cysteine 86-cysteine 137. Position 115 is a phosphoserine (serine 115). The short motif at 179–182 (HDEL) is the Prevents secretion from ER element.

This sequence belongs to the canopy family. As to quaternary structure, interacts with MYLIP/MIR. As to expression, expressed in different tissues. Highest levels are detected in adult placenta, liver and pancreas.

The protein localises to the endoplasmic reticulum. In terms of biological role, positive regulator of neurite outgrowth by stabilizing myosin regulatory light chain (MRLC). It prevents MIR-mediated MRLC ubiquitination and its subsequent proteasomal degradation. The chain is Protein canopy homolog 2 (CNPY2) from Homo sapiens (Human).